The following is a 408-amino-acid chain: Dual-specificity RNA methyltransferase RlmN (408 aa).

Glu126 acts as the Proton acceptor in catalysis. In terms of domain architecture, Radical SAM core spans 132–373 (EEGRGTLCLS…NQAGYASPIR (242 aa)). A disulfide bridge connects residues Cys139 and Cys384. 3 residues coordinate [4Fe-4S] cluster: Cys146, Cys150, and Cys153. Residues 210-211 (GE), Ser242, 264-266 (SLH), and Asn341 each bind S-adenosyl-L-methionine. The active-site S-methylcysteine intermediate is Cys384.

Belongs to the radical SAM superfamily. RlmN family. [4Fe-4S] cluster is required as a cofactor.

It is found in the cytoplasm. The enzyme catalyses adenosine(2503) in 23S rRNA + 2 reduced [2Fe-2S]-[ferredoxin] + 2 S-adenosyl-L-methionine = 2-methyladenosine(2503) in 23S rRNA + 5'-deoxyadenosine + L-methionine + 2 oxidized [2Fe-2S]-[ferredoxin] + S-adenosyl-L-homocysteine. It carries out the reaction adenosine(37) in tRNA + 2 reduced [2Fe-2S]-[ferredoxin] + 2 S-adenosyl-L-methionine = 2-methyladenosine(37) in tRNA + 5'-deoxyadenosine + L-methionine + 2 oxidized [2Fe-2S]-[ferredoxin] + S-adenosyl-L-homocysteine. Its function is as follows. Specifically methylates position 2 of adenine 2503 in 23S rRNA and position 2 of adenine 37 in tRNAs. m2A2503 modification seems to play a crucial role in the proofreading step occurring at the peptidyl transferase center and thus would serve to optimize ribosomal fidelity. In Bartonella henselae (strain ATCC 49882 / DSM 28221 / CCUG 30454 / Houston 1) (Rochalimaea henselae), this protein is Dual-specificity RNA methyltransferase RlmN.